The following is a 178-amino-acid chain: Large ribosomal subunit protein uL10 (178 aa).

The protein belongs to the universal ribosomal protein uL10 family. As to quaternary structure, part of the ribosomal stalk of the 50S ribosomal subunit. The N-terminus interacts with L11 and the large rRNA to form the base of the stalk. The C-terminus forms an elongated spine to which L12 dimers bind in a sequential fashion forming a multimeric L10(L12)X complex.

In terms of biological role, forms part of the ribosomal stalk, playing a central role in the interaction of the ribosome with GTP-bound translation factors. The sequence is that of Large ribosomal subunit protein uL10 from Leuconostoc mesenteroides subsp. mesenteroides (strain ATCC 8293 / DSM 20343 / BCRC 11652 / CCM 1803 / JCM 6124 / NCDO 523 / NBRC 100496 / NCIMB 8023 / NCTC 12954 / NRRL B-1118 / 37Y).